Consider the following 428-residue polypeptide: Protein ECERIFERUM 26 (428 aa).

The interval Met-1–Pro-36 is disordered. Positions Thr-21–Pro-36 are enriched in low complexity.

It belongs to the plant acyltransferase family. As to expression, highly expressed in leaves.

It localises to the cytoplasm. The protein localises to the cytosol. Its function is as follows. Involved in biosynthesis of the epicuticular wax. Plays a role in very-long-chain fatty acid (VLCFA) biosynthesis and is required for C30 fatty acid elongation in leaf. Despite its classification as a BAHD acyltransferase based on sequence homology, CER26 does not seem to share the catalytic mechanism of the members of the BAHD family. The polypeptide is Protein ECERIFERUM 26 (CER26) (Arabidopsis thaliana (Mouse-ear cress)).